A 149-amino-acid chain; its full sequence is Large ribosomal subunit protein bL9 (149 aa).

Belongs to the bacterial ribosomal protein bL9 family.

In terms of biological role, binds to the 23S rRNA. The sequence is that of Large ribosomal subunit protein bL9 from Rubrobacter xylanophilus (strain DSM 9941 / JCM 11954 / NBRC 16129 / PRD-1).